We begin with the raw amino-acid sequence, 251 residues long: Demethylmenaquinone methyltransferase (251 aa).

Residues T66, D87, and 115-116 (NA) contribute to the S-adenosyl-L-methionine site.

The protein belongs to the class I-like SAM-binding methyltransferase superfamily. MenG/UbiE family.

The catalysed reaction is a 2-demethylmenaquinol + S-adenosyl-L-methionine = a menaquinol + S-adenosyl-L-homocysteine + H(+). Its pathway is quinol/quinone metabolism; menaquinone biosynthesis; menaquinol from 1,4-dihydroxy-2-naphthoate: step 2/2. In terms of biological role, methyltransferase required for the conversion of demethylmenaquinol (DMKH2) to menaquinol (MKH2). The sequence is that of Demethylmenaquinone methyltransferase from Symbiobacterium thermophilum (strain DSM 24528 / JCM 14929 / IAM 14863 / T).